Reading from the N-terminus, the 246-residue chain is E3 ubiquitin-protein ligase MARCHF2 (246 aa).

The segment at 56–116 adopts an RING-CH-type zinc-finger fold; it reads GTQSDGPICR…ELCHTEFAVE (61 aa). The Zn(2+) site is built by C64, C67, C80, C82, H90, C93, C106, and C109. 2 helical membrane-spanning segments follow: residues 138–158 and 175–195; these read LFCD…SGWL and AVGL…WTLV.

Its subcellular location is the endoplasmic reticulum membrane. It is found in the lysosome membrane. The protein resides in the endosome membrane. It carries out the reaction S-ubiquitinyl-[E2 ubiquitin-conjugating enzyme]-L-cysteine + [acceptor protein]-L-lysine = [E2 ubiquitin-conjugating enzyme]-L-cysteine + N(6)-ubiquitinyl-[acceptor protein]-L-lysine.. It participates in protein modification; protein ubiquitination. In terms of biological role, E3 ubiquitin-protein ligase which may be involved in endosomal trafficking. E3 ubiquitin ligases accept ubiquitin from an E2 ubiquitin-conjugating enzyme in the form of a thioester and then directly transfer the ubiquitin to targeted substrates. The sequence is that of E3 ubiquitin-protein ligase MARCHF2 (marchf2) from Xenopus tropicalis (Western clawed frog).